The sequence spans 102 residues: Small ribosomal subunit protein uS10 (102 aa).

This sequence belongs to the universal ribosomal protein uS10 family. As to quaternary structure, part of the 30S ribosomal subunit.

Functionally, involved in the binding of tRNA to the ribosomes. The chain is Small ribosomal subunit protein uS10 from Hyperthermus butylicus (strain DSM 5456 / JCM 9403 / PLM1-5).